The sequence spans 496 residues: RNA-binding motif protein, Y chromosome, family 1 member E (496 aa).

Residues 8 to 85 form the RRM domain; that stretch reads GKLFIGGLNR…KAIKVEQAKK (78 aa). Disordered regions lie at residues 67-348 and 453-496; these read DMNG…PHRD and DQRN…SSRY. Composition is skewed to low complexity over residues 97 to 114 and 149 to 159; these read PASS…SARG and PVKRGPSSRSG. Positions 175-184 are enriched in polar residues; it reads NSWMGSQGPM. 6 stretches are compositionally biased toward basic and acidic residues: residues 204–214, 242–253, 276–289, 313–326, 335–348, and 484–496; these read RNDRMSTRHDG, DNGHSNRDEHSS, AYRD…DESY, GYRD…HESY, SSRE…PHRD, and GESR…SSRY.

Interacts with splicing factor proteins SFRS3/SRP20, TRA2B/SFRS10, KHDRBS1/SAM68 and KHDRBS3. As to expression, testis-specific.

The protein localises to the nucleus. RNA-binding protein which may be involved in spermatogenesis. Required for sperm development, possibly by participating in pre-mRNA splicing in the testis. This is RNA-binding motif protein, Y chromosome, family 1 member E (RBMY1E) from Homo sapiens (Human).